The following is a 613-amino-acid chain: Ribosome-associated molecular chaperone SSB1 (613 aa).

Alanine 2 carries the post-translational modification N-acetylalanine. The tract at residues 2–391 (AEGVFQGAIG…ILTGQSTSDE (390 aa)) is nucleotide binding domain (NBD). Residue 16-18 (TTY) coordinates ATP. At threonine 47 the chain carries Phosphothreonine. ATP contacts are provided by residues lysine 73, 205 to 207 (GGT), 271 to 278 (ERAKRTLS), and glycine 342. Residues 392 to 402 (TKDLLLLDVAP) are inter-domain linker. Residues 403 to 613 (LSLGVGMQGD…RVVTKAMSSR (211 aa)) are substrate binding domain (SBD). Residues 428 to 430 (KRR) carry the Contributes to ribosome binding motif. Threonine 431 carries the phosphothreonine modification. The tract at residues 516-612 (SEEIEKMVNQ…KRVVTKAMSS (97 aa)) is lid domain (SBDalpha). The short motif at 574–582 (IEAALSDAL) is the Nuclear export signal element. Residues 601 to 613 (GLKRVVTKAMSSR) are required for interaction with ribosomes.

This sequence belongs to the heat shock protein 70 family. Ssb-type Hsp70 subfamily. Binds to ribosomes. Binds close to the ribosomal tunnel exit via contacts with both ribosomal proteins RPL35, RPL39 and RPL19, and rRNA. Directly interacts with nascent polypeptides. This interaction is dependent on the ribosome-associated complex (RAC). Interacts with SSE1. Interacts with FES1. Interacts with NAP1.

Its subcellular location is the cytoplasm. The enzyme catalyses ATP + H2O = ADP + phosphate + H(+). Functionally, ribosome-bound, Hsp70-type chaperone that assists in the cotranslational folding of newly synthesized proteins in the cytosol. Stimulates folding by interacting with nascent chains, binding to short, largely hydrophobic sequences exposed by unfolded proteins, thereby stabilizing longer, more slowly translated, and aggregation-prone nascent polypeptides and domains that cannot fold stably until fully synthesized. The Hsp70-protein substrate interaction depends on ATP-binding and on allosteric regulation between the NBD and the SBD. The ATP-bound state is characterized by a fast exchange rate of substrate (low affinity state), while in the ADP-bound state exchange is much slower (high affinity state). During the Hsp70 cycle, the chaperone switches between the ATP-bound state (open conformation) and the ADP-bound state (closed conformation) by major conformational rearrangements involving mainly the lid domain. Ssb cooperates with a specific Hsp40/Hsp70 co-chaperone termed the ribosome-associated complex (RAC), which stimulates the ATPase activity of the ribosome-associated pool of Ssbs and switches it to the high affinity substrate binding state. Hsp110 chaperone SSE1 and FES1 act as nucleotide exchange factors that cause substrate release. This is Ribosome-associated molecular chaperone SSB1 from Saccharomyces cerevisiae (strain ATCC 204508 / S288c) (Baker's yeast).